We begin with the raw amino-acid sequence, 458 residues long: MILMPMASVVAVAEPKWVSVWGRFLWMTLLSMALGSLLALLLPLGAVEEQCLAVLRGFHLLRSKLDRAQHVVTKCTSPSTELSVTSRDAGLLTVKTKASPAGKLEAKAALNQALEMKRQGKRGKAHKLFLHALKMDPGFVDALNELGIFSEEDKDIIQADYLYTRALTISPFHEKALINRDRTLPLVEEIDQRYFSVLDSKVRKVMSIPKGSSALRRVMEETYYHHIYHTVAIEGNTLTLAEIRHILETRYAVPGKSLEEQNEVIGMHAAMKYINSTLVSRIGSVTIDHMLEIHRRVLGYVDPVEAGRFRRTQVLVGHHIPPHPRDVEKQMQEFTQWLNSEDAMNLHPVEFAALAHYKLVYIHPFIDGNGRTSRLLMNLILMQAGYPPITIRKEQRSEYYHVLEVANEGDVRPFIRFIAKCTEVTLDTLLLATTEYSAALPEAQPNHSGFKETLPVRP.

The Cytoplasmic segment spans residues 1-23; it reads MILMPMASVVAVAEPKWVSVWGR. Residues 24 to 44 form a helical; Signal-anchor for type II membrane protein membrane-spanning segment; it reads FLWMTLLSMALGSLLALLLPL. Residues 45-458 are Lumenal-facing; that stretch reads GAVEEQCLAV…GFKETLPVRP (414 aa). At Ser-79 the chain carries O-AMP-serine; by autocatalysis. An O-AMP-threonine; by autocatalysis modification is found at Thr-80. 2 TPR repeats span residues 106–139 and 140–173; these read AKAA…DPGF and VDAL…SPFH. Thr-183 carries the O-AMP-threonine; by autocatalysis modification. The short motif at 230–235 is the Inhibitory (S/T)XXXE(G/N) motif element; the sequence is TVAIEG. Glu-234 is an ATP binding site. Residue Asn-275 is glycosylated (N-linked (GlcNAc...) asparagine). Residues 285 to 420 enclose the Fido domain; sequence VTIDHMLEIH…VRPFIRFIAK (136 aa). 316–319 is an ATP binding site; that stretch reads VGHH. His-363 is a catalytic residue. ATP-binding positions include 367-374, 399-400, and Asn-407; these read DGNGRTSR and YY.

This sequence belongs to the fic family. In terms of assembly, homodimer. Interacts with HD. Mg(2+) serves as cofactor. Requires Mn(2+) as cofactor. Auto-AMPylated in vitro.

It is found in the endoplasmic reticulum membrane. The enzyme catalyses L-tyrosyl-[protein] + ATP = O-(5'-adenylyl)-L-tyrosyl-[protein] + diphosphate. It catalyses the reaction 3-O-(5'-adenylyl)-L-threonyl-[protein] + H2O = L-threonyl-[protein] + AMP + H(+). It carries out the reaction L-threonyl-[protein] + ATP = 3-O-(5'-adenylyl)-L-threonyl-[protein] + diphosphate. Its activity is regulated as follows. The side chain of Glu-234 determines which of the two opposing activities (AMPylase or de-AMPylase) will take place. In response to endoplasmic reticulum stress, mediates de-AMPylase activity. Adenylyltransferase activity is inhibited by the inhibitory helix present at the N-terminus: Glu-234 binds ATP and competes with ATP-binding at Arg-374, thereby preventing adenylyltransferase activity. In unstressed cells, disengagement of Glu-234 promotes adenylyltransferase activity. Activation dissociates ATP-binding from Glu-234, allowing ordered binding of the entire ATP moiety with the alpha-phosphate in an orientation that is productive for accepting an incoming target hydroxyl side chain. Functionally, protein that can both mediate the addition of adenosine 5'-monophosphate (AMP) to specific residues of target proteins (AMPylation), and the removal of the same modification from target proteins (de-AMPylation), depending on the context. The side chain of Glu-231 determines which of the two opposing activities (AMPylase or de-AMPylase) will take place. Acts as a key regulator of the ERN1/IRE1-mediated unfolded protein response (UPR) by mediating AMPylation or de-AMPylation of HSPA5/BiP. In unstressed cells, acts as an adenylyltransferase by mediating AMPylation of HSPA5/BiP at 'Thr-518', thereby inactivating it. In response to endoplasmic reticulum stress, acts as a phosphodiesterase by mediating removal of ATP (de-AMPylation) from HSPA5/BiP at 'Thr-518', leading to restore HSPA5/BiP activity. Although it is able to AMPylate RhoA, Rac and Cdc42 Rho GTPases in vitro, Rho GTPases do not constitute physiological substrates. This is Protein adenylyltransferase FICD from Rattus norvegicus (Rat).